The chain runs to 156 residues: Putative pre-16S rRNA nuclease (156 aa).

This sequence belongs to the YqgF nuclease family.

It is found in the cytoplasm. Its function is as follows. Could be a nuclease involved in processing of the 5'-end of pre-16S rRNA. The protein is Putative pre-16S rRNA nuclease of Streptomyces avermitilis (strain ATCC 31267 / DSM 46492 / JCM 5070 / NBRC 14893 / NCIMB 12804 / NRRL 8165 / MA-4680).